Here is a 267-residue protein sequence, read N- to C-terminus: Apolipoprotein A-I (267 aa).

Positions 1–18 are cleaved as a signal peptide; that stretch reads MKAAVLTLAVLFLTGSQA. Tandem repeats lie at residues 68-89 and 90-111. Residues 68–267 form a 10 X approximate tandem repeats region; sequence LKLLDNWDSV…EEYTKKLNTQ (200 aa). M110 bears the Methionine sulfoxide mark. The stretch at 112-122 is one 3; half-length repeat; sequence KDLEEVKAKVQ. 5 consecutive repeat copies span residues 123 to 144, 145 to 166, 167 to 188, 189 to 210, and 211 to 232. A Methionine sulfoxide modification is found at M136. Residues 233-243 form a 9; half-length repeat; the sequence is PALEDLRQGLL. Repeat unit 10 spans residues 244-267; that stretch reads PVLESFKVSFLSALEEYTKKLNTQ.

Belongs to the apolipoprotein A1/A4/E family. As to quaternary structure, homodimer. Interacts with APOA1BP and CLU. Component of a sperm activating protein complex (SPAP), consisting of APOA1, an immunoglobulin heavy chain, an immunoglobulin light chain and albumin. Interacts with NDRG1. Interacts with SCGB3A2. Interacts with NAXE and YJEFN3. In terms of processing, glycosylated. Post-translationally, palmitoylated. Phosphorylation sites are present in the extracellular medium. In terms of tissue distribution, major protein of plasma HDL, also found in chylomicrons.

The protein localises to the secreted. Functionally, participates in the reverse transport of cholesterol from tissues to the liver for excretion by promoting cholesterol efflux from tissues and by acting as a cofactor for the lecithin cholesterol acyltransferase (LCAT). As part of the SPAP complex, activates spermatozoa motility. This Pan troglodytes (Chimpanzee) protein is Apolipoprotein A-I (APOA1).